The following is a 357-amino-acid chain: Ribosomal RNA large subunit methyltransferase M (357 aa).

S-adenosyl-L-methionine contacts are provided by residues Ser-183, 216–219 (APGG), Asp-235, Asp-255, and Asp-271. Lys-300 functions as the Proton acceptor in the catalytic mechanism.

Belongs to the class I-like SAM-binding methyltransferase superfamily. RNA methyltransferase RlmE family. RlmM subfamily. Monomer.

The protein localises to the cytoplasm. It catalyses the reaction cytidine(2498) in 23S rRNA + S-adenosyl-L-methionine = 2'-O-methylcytidine(2498) in 23S rRNA + S-adenosyl-L-homocysteine + H(+). Functionally, catalyzes the 2'-O-methylation at nucleotide C2498 in 23S rRNA. The chain is Ribosomal RNA large subunit methyltransferase M from Pseudomonas savastanoi pv. phaseolicola (strain 1448A / Race 6) (Pseudomonas syringae pv. phaseolicola (strain 1448A / Race 6)).